The following is a 149-amino-acid chain: Calmodulin-5/6/7/8 (149 aa).

A2 is subject to N-acetylalanine. 4 EF-hand domains span residues 8-43 (DQIS…LGQN), 44-79 (PTEA…KMKD), 81-116 (DSEE…LGEK), and 117-149 (LTDE…MMAK). Residues D21, D23, D25, C27, E32, D57, D59, N61, T63, E68, D94, D96, N98, and E105 each coordinate Ca(2+). N6,N6,N6-trimethyllysine is present on K116. Positions 130, 132, 134, 136, and 141 each coordinate Ca(2+).

It belongs to the calmodulin family. As to expression, high expression of PCM5 and 8 in stolon tips and stems, moderate in roots, and low in leaves. Steady-state expression of PCM6 in all the tissues tested, except in the leaves where the expression is lower.

Functionally, calmodulin mediates the control of a large number of enzymes, ion channels and other proteins by Ca(2+). Among the enzymes to be stimulated by the calmodulin-Ca(2+) complex are a number of protein kinases and phosphatases. The chain is Calmodulin-5/6/7/8 (PCM5) from Solanum tuberosum (Potato).